Here is a 675-residue protein sequence, read N- to C-terminus: UvrABC system protein B (675 aa).

Residues Glu-32 to Val-417 form the Helicase ATP-binding domain. Gly-45–Thr-52 lines the ATP pocket. The Beta-hairpin signature appears at Tyr-98–Ile-121. The Helicase C-terminal domain occupies Gln-436–Ile-602. The region spanning Ile-634–Asn-669 is the UVR domain.

Belongs to the UvrB family. In terms of assembly, forms a heterotetramer with UvrA during the search for lesions. Interacts with UvrC in an incision complex.

It localises to the cytoplasm. In terms of biological role, the UvrABC repair system catalyzes the recognition and processing of DNA lesions. A damage recognition complex composed of 2 UvrA and 2 UvrB subunits scans DNA for abnormalities. Upon binding of the UvrA(2)B(2) complex to a putative damaged site, the DNA wraps around one UvrB monomer. DNA wrap is dependent on ATP binding by UvrB and probably causes local melting of the DNA helix, facilitating insertion of UvrB beta-hairpin between the DNA strands. Then UvrB probes one DNA strand for the presence of a lesion. If a lesion is found the UvrA subunits dissociate and the UvrB-DNA preincision complex is formed. This complex is subsequently bound by UvrC and the second UvrB is released. If no lesion is found, the DNA wraps around the other UvrB subunit that will check the other stand for damage. The protein is UvrABC system protein B of Neisseria meningitidis serogroup B (strain ATCC BAA-335 / MC58).